Reading from the N-terminus, the 362-residue chain is MAGNSFGQLFRVTTFGESHGLALGAVVDGCPPGLEISEADLQGDLDRRKPGTSRYTTPRREPDEVKILSGVFEGKTTGTSIGLLIENTDQRSKDYSDIKDLFRPGHADYTYHQKYGQRDYRGGGRSSARETAMRVAAGAIAKKYLKQVHGIEITGFLSQLGPIKAEAFDAAQIEQNPFFFPDAGKLEALDQYMRDLKKEGNSIGAKVQVIASNVPVGLGEPVFDRLDADIAHAMMGINAVKGVEIGDGFAVVEQKGSEHRDEMTPAGFASNHAGGILGGISSGQDIVVSMALKPTSSITVPGKTITTEGEATEMITKGRHDPCVGIRAVPIAEAMLALVLMDHLLRHRAQNQGVLTHTPQLR.

The segment at 39-59 is disordered; it reads ADLQGDLDRRKPGTSRYTTPR. 2 residues coordinate NADP(+): R48 and R54. Residues 125–127, 238–239, G278, 293–297, and R319 each bind FMN; these read RSS, NA, and KPTSS.

This sequence belongs to the chorismate synthase family. As to quaternary structure, homotetramer. FMNH2 is required as a cofactor.

It carries out the reaction 5-O-(1-carboxyvinyl)-3-phosphoshikimate = chorismate + phosphate. It functions in the pathway metabolic intermediate biosynthesis; chorismate biosynthesis; chorismate from D-erythrose 4-phosphate and phosphoenolpyruvate: step 7/7. Its function is as follows. Catalyzes the anti-1,4-elimination of the C-3 phosphate and the C-6 proR hydrogen from 5-enolpyruvylshikimate-3-phosphate (EPSP) to yield chorismate, which is the branch point compound that serves as the starting substrate for the three terminal pathways of aromatic amino acid biosynthesis. This reaction introduces a second double bond into the aromatic ring system. This chain is Chorismate synthase, found in Aeromonas hydrophila subsp. hydrophila (strain ATCC 7966 / DSM 30187 / BCRC 13018 / CCUG 14551 / JCM 1027 / KCTC 2358 / NCIMB 9240 / NCTC 8049).